The sequence spans 265 residues: Elongation factor 1-delta (265 aa).

The span at 31 to 54 shows a compositional bias: polar residues; that stretch reads MGSASNKPHNSPQSAASALSNSGD. Disordered regions lie at residues 31-64 and 118-155; these read MGSA…RVAN and KVQV…DAEA. The span at 130–153 shows a compositional bias: acidic residues; the sequence is GTGEDDDDDDDIDLFGSDNEEEDA.

It belongs to the EF-1-beta/EF-1-delta family. EF-1 is composed of 4 subunits: alpha, beta, delta, and gamma.

Its function is as follows. EF-1-beta and EF-1-delta stimulate the exchange of GDP bound to EF-1-alpha to GTP. This Xenopus laevis (African clawed frog) protein is Elongation factor 1-delta (eef1d).